We begin with the raw amino-acid sequence, 210 residues long: Na(+)-translocating NADH-quinone reductase subunit D (210 aa).

6 helical membrane-spanning segments follow: residues 11–31, 42–62, 70–90, 103–123, 131–151, and 178–198; these read ILAP…VCSA, FVMT…VSLI, VRII…DQIL, VFVG…AFAM, FIDG…VGFF, and NGLM…IWAI.

Belongs to the NqrDE/RnfAE family. Composed of six subunits; NqrA, NqrB, NqrC, NqrD, NqrE and NqrF.

The protein resides in the cell inner membrane. The enzyme catalyses a ubiquinone + n Na(+)(in) + NADH + H(+) = a ubiquinol + n Na(+)(out) + NAD(+). Its function is as follows. NQR complex catalyzes the reduction of ubiquinone-1 to ubiquinol by two successive reactions, coupled with the transport of Na(+) ions from the cytoplasm to the periplasm. NqrA to NqrE are probably involved in the second step, the conversion of ubisemiquinone to ubiquinol. This is Na(+)-translocating NADH-quinone reductase subunit D from Vibrio anguillarum (Listonella anguillarum).